Reading from the N-terminus, the 75-residue chain is Small ribosomal subunit protein bS18 (75 aa).

Belongs to the bacterial ribosomal protein bS18 family. Part of the 30S ribosomal subunit. Forms a tight heterodimer with protein bS6.

Binds as a heterodimer with protein bS6 to the central domain of the 16S rRNA, where it helps stabilize the platform of the 30S subunit. This is Small ribosomal subunit protein bS18 from Shewanella amazonensis (strain ATCC BAA-1098 / SB2B).